A 344-amino-acid polypeptide reads, in one-letter code: Exopolyphosphatase 1 (344 aa).

Positions 319–344 (VHTSVRAVGGQPADRNAANRSRGSKP) are disordered.

This sequence belongs to the GppA/Ppx family. In terms of assembly, homodimer.

It catalyses the reaction [phosphate](n) + H2O = [phosphate](n-1) + phosphate + H(+). In terms of biological role, degradation of inorganic polyphosphates (polyP). Releases orthophosphate processively from the ends of the polyP chain. The protein is Exopolyphosphatase 1 of Mycobacterium bovis (strain ATCC BAA-935 / AF2122/97).